A 223-amino-acid chain; its full sequence is Endonuclease V (223 aa).

2 residues coordinate Mg(2+): Asp-35 and Asp-103.

The protein belongs to the endonuclease V family. Mg(2+) is required as a cofactor.

The protein resides in the cytoplasm. It catalyses the reaction Endonucleolytic cleavage at apurinic or apyrimidinic sites to products with a 5'-phosphate.. DNA repair enzyme involved in the repair of deaminated bases. Selectively cleaves double-stranded DNA at the second phosphodiester bond 3' to a deoxyinosine leaving behind the intact lesion on the nicked DNA. The sequence is that of Endonuclease V from Klebsiella pneumoniae subsp. pneumoniae (strain ATCC 700721 / MGH 78578).